The chain runs to 272 residues: Shikimate dehydrogenase (NADP(+)) (272 aa).

Shikimate-binding positions include Ser-14–Ser-16 and Thr-61. Lys-65 functions as the Proton acceptor in the catalytic mechanism. Residue Glu-77 coordinates NADP(+). Shikimate is bound by residues Asn-86 and Asp-102. NADP(+)-binding positions include Gly-126 to Ala-130, Asn-149 to Lys-154, and Met-212. Residue Tyr-214 coordinates shikimate. Residue Gly-237 participates in NADP(+) binding.

It belongs to the shikimate dehydrogenase family. In terms of assembly, homodimer.

The catalysed reaction is shikimate + NADP(+) = 3-dehydroshikimate + NADPH + H(+). It participates in metabolic intermediate biosynthesis; chorismate biosynthesis; chorismate from D-erythrose 4-phosphate and phosphoenolpyruvate: step 4/7. Involved in the biosynthesis of the chorismate, which leads to the biosynthesis of aromatic amino acids. Catalyzes the reversible NADPH linked reduction of 3-dehydroshikimate (DHSA) to yield shikimate (SA). This is Shikimate dehydrogenase (NADP(+)) from Glaesserella parasuis serovar 5 (strain SH0165) (Haemophilus parasuis).